Reading from the N-terminus, the 400-residue chain is Nicotinate phosphoribosyltransferase (400 aa).

At His-220 the chain carries Phosphohistidine; by autocatalysis.

Belongs to the NAPRTase family. In terms of processing, transiently phosphorylated on a His residue during the reaction cycle. Phosphorylation strongly increases the affinity for substrates and increases the rate of nicotinate D-ribonucleotide production. Dephosphorylation regenerates the low-affinity form of the enzyme, leading to product release.

The catalysed reaction is nicotinate + 5-phospho-alpha-D-ribose 1-diphosphate + ATP + H2O = nicotinate beta-D-ribonucleotide + ADP + phosphate + diphosphate. Its pathway is cofactor biosynthesis; NAD(+) biosynthesis; nicotinate D-ribonucleotide from nicotinate: step 1/1. Its function is as follows. Catalyzes the synthesis of beta-nicotinate D-ribonucleotide from nicotinate and 5-phospho-D-ribose 1-phosphate at the expense of ATP. This chain is Nicotinate phosphoribosyltransferase, found in Shigella sonnei (strain Ss046).